Here is a 230-residue protein sequence, read N- to C-terminus: U2 small nuclear ribonucleoprotein A' (230 aa).

LRR repeat units lie at residues 15–36, 48–69, 71–92, 93–114, and 115–136; these read SLRNNIFTNNSITKNMRLNADT, GDRELNLRGLQIPVIENLGVTE, HYTSLDLSDNEIRVMGGFPRLE, TLRTLLLSKNRITQINDVKNIA, and KLETLVLTQNGIATLGALESLK. Residues 149 to 187 form the LRRCT domain; the sequence is NPVQHVPRYRSYMISILPSLRMLDFQRVTQKERDEAEAM.

The protein belongs to the U2 small nuclear ribonucleoprotein A family. Associated with the spliceosome.

It localises to the nucleus. Its function is as follows. Involved in pre-mRNA splicing. The sequence is that of U2 small nuclear ribonucleoprotein A' (LEA1) from Yarrowia lipolytica (strain CLIB 122 / E 150) (Yeast).